The primary structure comprises 122 residues: Basic phospholipase A2 PL-X (122 aa).

7 disulfide bridges follow: Cys26–Cys115, Cys28–Cys44, Cys43–Cys95, Cys49–Cys122, Cys50–Cys88, Cys57–Cys81, and Cys75–Cys86. The Ca(2+) site is built by Tyr27, Gly29, and Gly31. Residue His47 is part of the active site. Asp48 provides a ligand contact to Ca(2+). Residue Asp89 is part of the active site.

Belongs to the phospholipase A2 family. Group II subfamily. D49 sub-subfamily. It depends on Ca(2+) as a cofactor. In terms of tissue distribution, expressed by the venom gland.

The protein localises to the secreted. It catalyses the reaction a 1,2-diacyl-sn-glycero-3-phosphocholine + H2O = a 1-acyl-sn-glycero-3-phosphocholine + a fatty acid + H(+). Its function is as follows. PLA2 catalyzes the calcium-dependent hydrolysis of the 2-acyl groups in 3-sn-phosphoglycerides. This is Basic phospholipase A2 PL-X from Protobothrops flavoviridis (Habu).